We begin with the raw amino-acid sequence, 101 residues long: NAD(P)H-quinone oxidoreductase subunit 4L, chloroplastic (101 aa).

A run of 3 helical transmembrane segments spans residues 2-22 (MFEYALVLSSYLFSMGIYGLI), 32-52 (MCLELILNAVNMNLVTFSDLF), and 61-81 (IFSIFVIAIAAAEAAIGPAIV).

It belongs to the complex I subunit 4L family. In terms of assembly, NDH is composed of at least 16 different subunits, 5 of which are encoded in the nucleus.

It is found in the plastid. It localises to the chloroplast thylakoid membrane. The enzyme catalyses a plastoquinone + NADH + (n+1) H(+)(in) = a plastoquinol + NAD(+) + n H(+)(out). It catalyses the reaction a plastoquinone + NADPH + (n+1) H(+)(in) = a plastoquinol + NADP(+) + n H(+)(out). In terms of biological role, NDH shuttles electrons from NAD(P)H:plastoquinone, via FMN and iron-sulfur (Fe-S) centers, to quinones in the photosynthetic chain and possibly in a chloroplast respiratory chain. The immediate electron acceptor for the enzyme in this species is believed to be plastoquinone. Couples the redox reaction to proton translocation, and thus conserves the redox energy in a proton gradient. The sequence is that of NAD(P)H-quinone oxidoreductase subunit 4L, chloroplastic from Amborella trichopoda.